The primary structure comprises 440 residues: Light-independent protochlorophyllide reductase subunit N (440 aa).

Cysteine 15, cysteine 40, and cysteine 99 together coordinate [4Fe-4S] cluster.

Belongs to the BchN/ChlN family. As to quaternary structure, protochlorophyllide reductase is composed of three subunits; BchL, BchN and BchB. Forms a heterotetramer of two BchB and two BchN subunits. [4Fe-4S] cluster serves as cofactor.

It catalyses the reaction chlorophyllide a + oxidized 2[4Fe-4S]-[ferredoxin] + 2 ADP + 2 phosphate = protochlorophyllide a + reduced 2[4Fe-4S]-[ferredoxin] + 2 ATP + 2 H2O. It functions in the pathway porphyrin-containing compound metabolism; bacteriochlorophyll biosynthesis (light-independent). Component of the dark-operative protochlorophyllide reductase (DPOR) that uses Mg-ATP and reduced ferredoxin to reduce ring D of protochlorophyllide (Pchlide) to form chlorophyllide a (Chlide). This reaction is light-independent. The NB-protein (BchN-BchB) is the catalytic component of the complex. In Heliobacterium mobile (Heliobacillus mobilis), this protein is Light-independent protochlorophyllide reductase subunit N.